A 181-amino-acid chain; its full sequence is CDP-diacylglycerol--glycerol-3-phosphate 3-phosphatidyltransferase (181 aa).

4 helical membrane passes run 8 to 28 (PNYLTIARIMVIPVIILAFYI), 35 to 55 (KLGALLFVLASITDFFDGYIA), 64 to 84 (FGKMFDPIADKLLIGCVIIML), and 148 to 168 (IIYLDIVGEIILWIAAFLTII).

It belongs to the CDP-alcohol phosphatidyltransferase class-I family.

The protein resides in the cell membrane. It catalyses the reaction a CDP-1,2-diacyl-sn-glycerol + sn-glycerol 3-phosphate = a 1,2-diacyl-sn-glycero-3-phospho-(1'-sn-glycero-3'-phosphate) + CMP + H(+). The protein operates within phospholipid metabolism; phosphatidylglycerol biosynthesis; phosphatidylglycerol from CDP-diacylglycerol: step 1/2. Its function is as follows. This protein catalyzes the committed step to the synthesis of the acidic phospholipids. This chain is CDP-diacylglycerol--glycerol-3-phosphate 3-phosphatidyltransferase (pgsA), found in Rickettsia felis (strain ATCC VR-1525 / URRWXCal2) (Rickettsia azadi).